Reading from the N-terminus, the 101-residue chain is A-type ATP synthase subunit K (101 aa).

3 helical membrane-spanning segments follow: residues 5-25 (WLPF…AQAP), 37-57 (IGAG…VGMA), and 75-95 (ILIF…FAVL).

Belongs to the V-ATPase proteolipid subunit family. In terms of assembly, has multiple subunits with at least A(3), B(3), C, D, E, F, H, I and proteolipid K(x). Post-translationally, the N-terminus is blocked.

The protein localises to the cell membrane. Its function is as follows. Component of the A-type ATP synthase that produces ATP from ADP in the presence of a proton gradient across the membrane. This chain is A-type ATP synthase subunit K, found in Sulfurisphaera tokodaii (strain DSM 16993 / JCM 10545 / NBRC 100140 / 7) (Sulfolobus tokodaii).